The primary structure comprises 144 residues: Cytochrome c oxidase subunit 4 isoform 1, mitochondrial (144 aa).

Residues 1–73 lie on the Mitochondrial matrix side of the membrane; that stretch reads SVVKSEDFSL…SFAEMNRGSN (73 aa). N6-acetyllysine; alternate is present on lysine 4. N6-succinyllysine; alternate is present on lysine 4. The residue at position 28 (lysine 28) is an N6-acetyllysine. Serine 31 and serine 33 each carry phosphoserine. Position 35 is an N6-acetyllysine; alternate (lysine 35). Lysine 35 is subject to N6-succinyllysine; alternate. Lysine 42 is subject to N6-acetyllysine. The helical transmembrane segment at 74–99 threads the bilayer; the sequence is EWKTVVGGAMFFIGFTALVIMWQKHY. Residues 100-144 lie on the Mitochondrial intermembrane side of the membrane; sequence VYGPLPQSFDKEWVAKQTKRMLDMKVNPIQGLASKWDYEKNEWKK.

Belongs to the cytochrome c oxidase IV family. In terms of assembly, component of the cytochrome c oxidase (complex IV, CIV), a multisubunit enzyme composed of 14 subunits. The complex is composed of a catalytic core of 3 subunits MT-CO1, MT-CO2 and MT-CO3, encoded in the mitochondrial DNA, and 11 supernumerary subunits COX4I, COX5A, COX5B, COX6A, COX6B, COX6C, COX7A, COX7B, COX7C, COX8 and NDUFA4, which are encoded in the nuclear genome. The complex exists as a monomer or a dimer and forms supercomplexes (SCs) in the inner mitochondrial membrane with NADH-ubiquinone oxidoreductase (complex I, CI) and ubiquinol-cytochrome c oxidoreductase (cytochrome b-c1 complex, complex III, CIII), resulting in different assemblies (supercomplex SCI(1)III(2)IV(1) and megacomplex MCI(2)III(2)IV(2)). Interacts with PHB2; the interaction decreases in absence of SPHK2. Interacts with AFG1L. Interacts with ABCB7; this interaction allows the regulation of cellular iron homeostasis and cellular reactive oxygen species (ROS) levels in cardiomyocytes. Interacts with FLVCR2; this interaction occurs in the absence of heme and is disrupted upon heme binding. Interacts with IRGC.

Its subcellular location is the mitochondrion inner membrane. The protein operates within energy metabolism; oxidative phosphorylation. In terms of biological role, component of the cytochrome c oxidase, the last enzyme in the mitochondrial electron transport chain which drives oxidative phosphorylation. The respiratory chain contains 3 multisubunit complexes succinate dehydrogenase (complex II, CII), ubiquinol-cytochrome c oxidoreductase (cytochrome b-c1 complex, complex III, CIII) and cytochrome c oxidase (complex IV, CIV), that cooperate to transfer electrons derived from NADH and succinate to molecular oxygen, creating an electrochemical gradient over the inner membrane that drives transmembrane transport and the ATP synthase. Cytochrome c oxidase is the component of the respiratory chain that catalyzes the reduction of oxygen to water. Electrons originating from reduced cytochrome c in the intermembrane space (IMS) are transferred via the dinuclear copper A center (CU(A)) of subunit 2 and heme A of subunit 1 to the active site in subunit 1, a binuclear center (BNC) formed by heme A3 and copper B (CU(B)). The BNC reduces molecular oxygen to 2 water molecules using 4 electrons from cytochrome c in the IMS and 4 protons from the mitochondrial matrix. This is Cytochrome c oxidase subunit 4 isoform 1, mitochondrial (COX4I1) from Pan troglodytes (Chimpanzee).